Reading from the N-terminus, the 347-residue chain is Holliday junction branch migration complex subunit RuvB (347 aa).

The segment at 1–183 (MTPPSRIVTP…FGIPIRLNFY (183 aa)) is large ATPase domain (RuvB-L). ATP-binding positions include L22, R23, G64, K67, T68, T69, 130–132 (EDF), R173, Y183, and R220. T68 serves as a coordination point for Mg(2+). Residues 184–254 (TVEELEGIVS…IADHALSALE (71 aa)) form a small ATPAse domain (RuvB-S) region. The interval 257-347 (AAGLDAMDRR…QFGLFGGDEE (91 aa)) is head domain (RuvB-H). DNA-binding residues include R293, R312, and R317.

The protein belongs to the RuvB family. As to quaternary structure, homohexamer. Forms an RuvA(8)-RuvB(12)-Holliday junction (HJ) complex. HJ DNA is sandwiched between 2 RuvA tetramers; dsDNA enters through RuvA and exits via RuvB. An RuvB hexamer assembles on each DNA strand where it exits the tetramer. Each RuvB hexamer is contacted by two RuvA subunits (via domain III) on 2 adjacent RuvB subunits; this complex drives branch migration. In the full resolvosome a probable DNA-RuvA(4)-RuvB(12)-RuvC(2) complex forms which resolves the HJ.

It is found in the cytoplasm. The enzyme catalyses ATP + H2O = ADP + phosphate + H(+). Functionally, the RuvA-RuvB-RuvC complex processes Holliday junction (HJ) DNA during genetic recombination and DNA repair, while the RuvA-RuvB complex plays an important role in the rescue of blocked DNA replication forks via replication fork reversal (RFR). RuvA specifically binds to HJ cruciform DNA, conferring on it an open structure. The RuvB hexamer acts as an ATP-dependent pump, pulling dsDNA into and through the RuvAB complex. RuvB forms 2 homohexamers on either side of HJ DNA bound by 1 or 2 RuvA tetramers; 4 subunits per hexamer contact DNA at a time. Coordinated motions by a converter formed by DNA-disengaged RuvB subunits stimulates ATP hydrolysis and nucleotide exchange. Immobilization of the converter enables RuvB to convert the ATP-contained energy into a lever motion, pulling 2 nucleotides of DNA out of the RuvA tetramer per ATP hydrolyzed, thus driving DNA branch migration. The RuvB motors rotate together with the DNA substrate, which together with the progressing nucleotide cycle form the mechanistic basis for DNA recombination by continuous HJ branch migration. Branch migration allows RuvC to scan DNA until it finds its consensus sequence, where it cleaves and resolves cruciform DNA. This chain is Holliday junction branch migration complex subunit RuvB, found in Rhodopseudomonas palustris (strain BisA53).